The following is a 421-amino-acid chain: DNA (cytosine-5)-methyltransferase 3-like (421 aa).

The segment covering 1–14 (MGSRETPSSCSKTL) has biased composition (polar residues). The segment at 1-39 (MGSRETPSSCSKTLETLDLETSDSSSPDADSPLEEQWLK) is disordered. The 133-residue stretch at 75–207 (EVKVNRRSIE…LKAFHDQEGA (133 aa)) folds into the ADD domain. The GATA-type; atypical zinc-finger motif lies at 86–116 (ICLCCGTLQVYTRHPLFEGGLCAPCKDKFLE). The PHD-type; atypical zinc finger occupies 127–183 (QSYCTICCSGGTLFICESPDCTRCYCFECVDILVGPGTSERINAMACWVCFLCLPFS).

Homodimer. Heterotetramer composed of 1 DNMT3A homodimer and 2 DNMT3L subunits (DNMT3L-DNMT3A-DNMT3A-DNMT3L). Interacts with histone H3 (via N-terminus); interaction is strongly inhibited by methylation at lysine 4 (H3K4me). Interacts with EZH2; the interaction is direct. Interacts with SPOCD1. Expressed in testis, thymus, ovary, and heart.

The protein resides in the nucleus. Catalytically inactive regulatory factor of DNA methyltransferases that can either promote or inhibit DNA methylation depending on the context. Essential for the function of DNMT3A and DNMT3B: activates DNMT3A and DNMT3B by binding to their catalytic domain. Acts by accelerating the binding of DNA and S-adenosyl-L-methionine (AdoMet) to the methyltransferases and dissociates from the complex after DNA binding to the methyltransferases. Recognizes unmethylated histone H3 lysine 4 (H3K4me0) and induces de novo DNA methylation by recruitment or activation of DNMT3. Plays a key role in embryonic stem cells and germ cells. In germ cells, required for the methylation of imprinted loci together with DNMT3A. In male germ cells, specifically required to methylate retrotransposons, preventing their mobilization. Plays a key role in embryonic stem cells (ESCs) by acting both as an positive and negative regulator of DNA methylation. While it promotes DNA methylation of housekeeping genes together with DNMT3A and DNMT3B, it also acts as an inhibitor of DNA methylation at the promoter of bivalent genes. Interacts with the EZH2 component of the PRC2/EED-EZH2 complex, preventing interaction of DNMT3A and DNMT3B with the PRC2/EED-EZH2 complex, leading to maintain low methylation levels at the promoters of bivalent genes. Promotes differentiation of ESCs into primordial germ cells by inhibiting DNA methylation at the promoter of RHOX5, thereby activating its expression. The chain is DNA (cytosine-5)-methyltransferase 3-like (Dnmt3l) from Mus musculus (Mouse).